Consider the following 231-residue polypeptide: Large ribosomal subunit protein uL1 (231 aa).

Belongs to the universal ribosomal protein uL1 family. Part of the 50S ribosomal subunit.

Functionally, binds directly to 23S rRNA. The L1 stalk is quite mobile in the ribosome, and is involved in E site tRNA release. In terms of biological role, protein L1 is also a translational repressor protein, it controls the translation of the L11 operon by binding to its mRNA. This is Large ribosomal subunit protein uL1 from Pseudomonas putida (strain ATCC 700007 / DSM 6899 / JCM 31910 / BCRC 17059 / LMG 24140 / F1).